The primary structure comprises 512 residues: Probable DNA ligase (512 aa).

Glutamate 208 is an ATP binding site. Catalysis depends on lysine 210, which acts as the N6-AMP-lysine intermediate. Positions 215, 230, 259, 299, 374, and 380 each coordinate ATP.

It belongs to the ATP-dependent DNA ligase family. Requires Mg(2+) as cofactor.

It catalyses the reaction ATP + (deoxyribonucleotide)n-3'-hydroxyl + 5'-phospho-(deoxyribonucleotide)m = (deoxyribonucleotide)n+m + AMP + diphosphate.. Functionally, DNA ligase that seals nicks in double-stranded DNA during DNA replication, DNA recombination and DNA repair. The polypeptide is Probable DNA ligase (Streptomyces avermitilis (strain ATCC 31267 / DSM 46492 / JCM 5070 / NBRC 14893 / NCIMB 12804 / NRRL 8165 / MA-4680)).